An 863-amino-acid chain; its full sequence is Glycogen phosphorylase (863 aa).

The residue at position 618 (lysine 618) is an N6-(pyridoxal phosphate)lysine.

Belongs to the glycogen phosphorylase family. It depends on pyridoxal 5'-phosphate as a cofactor.

The catalysed reaction is [(1-&gt;4)-alpha-D-glucosyl](n) + phosphate = [(1-&gt;4)-alpha-D-glucosyl](n-1) + alpha-D-glucose 1-phosphate. Phosphorylase is an important allosteric enzyme in carbohydrate metabolism. Enzymes from different sources differ in their regulatory mechanisms and in their natural substrates. However, all known phosphorylases share catalytic and structural properties. The polypeptide is Glycogen phosphorylase (glgP) (Mycobacterium tuberculosis (strain ATCC 25618 / H37Rv)).